Reading from the N-terminus, the 307-residue chain is tRNA pseudouridine synthase B (307 aa).

The active-site Nucleophile is D38.

This sequence belongs to the pseudouridine synthase TruB family. Type 1 subfamily.

It carries out the reaction uridine(55) in tRNA = pseudouridine(55) in tRNA. Responsible for synthesis of pseudouridine from uracil-55 in the psi GC loop of transfer RNAs. This Bacillus cereus (strain ZK / E33L) protein is tRNA pseudouridine synthase B.